Reading from the N-terminus, the 202-residue chain is dITP/XTP pyrophosphatase (202 aa).

Substrate is bound at residue 7–12 (SNNPGK). Mg(2+)-binding residues include glutamate 39 and aspartate 68. The Proton acceptor role is filled by aspartate 68. Substrate-binding positions include alanine 69, 157–160 (FGFD), lysine 180, and 185–186 (HR).

Belongs to the HAM1 NTPase family. Homodimer. The cofactor is Mg(2+).

The catalysed reaction is XTP + H2O = XMP + diphosphate + H(+). It carries out the reaction dITP + H2O = dIMP + diphosphate + H(+). The enzyme catalyses ITP + H2O = IMP + diphosphate + H(+). Functionally, pyrophosphatase that catalyzes the hydrolysis of nucleoside triphosphates to their monophosphate derivatives, with a high preference for the non-canonical purine nucleotides XTP (xanthosine triphosphate), dITP (deoxyinosine triphosphate) and ITP. Seems to function as a house-cleaning enzyme that removes non-canonical purine nucleotides from the nucleotide pool, thus preventing their incorporation into DNA/RNA and avoiding chromosomal lesions. This chain is dITP/XTP pyrophosphatase, found in Polaromonas naphthalenivorans (strain CJ2).